The primary structure comprises 1044 residues: GRB10-interacting GYF protein 1 (1044 aa).

4 positions are modified to phosphoserine: Ser24, Ser28, Ser137, and Ser157. Disordered regions lie at residues 104–290 (GKGA…DGLP) and 306–424 (ASGA…LEDE). 2 stretches are compositionally biased toward basic and acidic residues: residues 148-179 (NPREIQRSQSWDDRGERRFEKPARRDGVRSGF) and 186-203 (PRKEHARSDSENWRSLRE). Ser228 carries the post-translational modification Phosphoserine. Composition is skewed to basic and acidic residues over residues 237–265 (GWREHGERRRKFDFDLRGERGGCGEEDGR) and 316–332 (GPKEAIPEEQELDFRGL). Positions 333–350 (EEEEEEEEEPSEGVDEER) are enriched in acidic residues. Ser343 is subject to Phosphoserine. The segment covering 366 to 379 (NSSSPSSLPALGPL) has biased composition (low complexity). Residues 389–403 (AVEKELPPAEGDELR) show a composition bias toward basic and acidic residues. Position 408 is a phosphoserine (Ser408). The GYF domain maps to 476-524 (ARKWFYKDPQGEIQGPFTTQEMAEWFQAGYFSMSLLVKRGCDEGFQPLG). Residues Ser540 and Ser634 each carry the phosphoserine modification. Residues 692 to 706 (KREEEERKRREEKRR) are compositionally biased toward basic and acidic residues. 6 disordered regions span residues 692-721 (KREEEERKRREEKRRQQQQQQEEQKRRQEE), 820-842 (EAGPLWGGPDKSGGSSGGNLGLW), 855-883 (SLGLKSSRSSPSLSDSYSHLSGRPVRKKT), 966-987 (QKASQQRQQQQQQQQQQQQEAW), 1000-1019 (NHSTKLGPGEGSKAKRRALM), and 1024-1044 (PSILGYSLHGPSGEIESVDDY). A compositionally biased stretch (gly residues) spans 829–839 (DKSGGSSGGNL). 2 stretches are compositionally biased toward low complexity: residues 855–877 (SLGLKSSRSSPSLSDSYSHLSGR) and 970–984 (QQRQQQQQQQQQQQQ). The residue at position 863 (Ser863) is a Phosphoserine.

It belongs to the GIGYF family. In terms of assembly, interacts with GRB10. This transient binding is increased under IGF1 stimulation and leads to recruitment of GIGYF1/GRB10 complex to IGF1 receptor. Interacts with DDX6. As to expression, ubiquitous. Lower expression in skeletal muscle, liver and testis.

Functionally, may act cooperatively with GRB10 to regulate tyrosine kinase receptor signaling. May increase IGF1 receptor phosphorylation under IGF1 stimulation as well as phosphorylation of IRS1 and SHC1. This Mus musculus (Mouse) protein is GRB10-interacting GYF protein 1 (Gigyf1).